A 600-amino-acid polypeptide reads, in one-letter code: Autophagy-related protein 22-2 (600 aa).

The segment at 1-30 (MAFASPPASPPDEDGQARAPRYPGEDTTPT) is disordered. The next 4 membrane-spanning stretches (helical) occupy residues 41–61 (YGIAAEVFAVCGVGSFLPLTL), 117–137 (SFAMYTFSLAVLVQALTLISF), 149–168 (TLLVTFGFIGSATSMLFVFI), and 186–206 (CLGSSFVVLNSFLPVLVASDP). The interval 234–257 (SFDGDEPTHRPPTGLGLGGATGTS) is disordered. The next 4 helical transmembrane spans lie at 271 to 291 (GVGLGYCAAVFVQILSILLLF), 304 to 324 (TLPLRFVLLLVGIWWFSFTMV), 378 to 398 (VIVFLVAWFLLSDAMATVSGT), and 414 to 434 (VALLSITATLSGMAGAFLWPI). Asn-444 carries N-linked (GlcNAc...) asparagine glycosylation. The next 4 helical transmembrane spans lie at 449–469 (VCIALFELIPLYGMLAYIPLF), 484–506 (YPLAIVHGVVSGGLSSYCRSFFG), 526–546 (KGSSFIGPAIVGVLIDATGQV), and 549–569 (GFFFIAVLIVLPIPLVWMVDA).

It belongs to the ATG22 family.

It is found in the vacuole membrane. Functionally, vacuolar effluxer which mediate the efflux of amino acids resulting from autophagic degradation. The release of autophagic amino acids allows the maintenance of protein synthesis and viability during nitrogen starvation. This chain is Autophagy-related protein 22-2 (atg22-2), found in Aspergillus niger (strain ATCC MYA-4892 / CBS 513.88 / FGSC A1513).